The sequence spans 277 residues: F420-dependent methylenetetrahydromethanopterin dehydrogenase (277 aa).

The protein belongs to the MTD family.

It carries out the reaction 5,10-methylenetetrahydromethanopterin + oxidized coenzyme F420-(gamma-L-Glu)(n) + 2 H(+) = 5,10-methenyl-5,6,7,8-tetrahydromethanopterin + reduced coenzyme F420-(gamma-L-Glu)(n). Its pathway is one-carbon metabolism; methanogenesis from CO(2); 5,10-methylene-5,6,7,8-tetrahydromethanopterin from 5,10-methenyl-5,6,7,8-tetrahydromethanopterin (coenzyme F420 route): step 1/1. Functionally, catalyzes the reversible reduction of methenyl-H(4)MPT(+) to methylene-H(4)MPT. The protein is F420-dependent methylenetetrahydromethanopterin dehydrogenase of Methanococcus maripaludis (strain C5 / ATCC BAA-1333).